Here is a 60-residue protein sequence, read N- to C-terminus: Large ribosomal subunit protein uL30 (60 aa).

Belongs to the universal ribosomal protein uL30 family. Part of the 50S ribosomal subunit.

This chain is Large ribosomal subunit protein uL30, found in Baumannia cicadellinicola subsp. Homalodisca coagulata.